Reading from the N-terminus, the 599-residue chain is MRTTLRLHIIKDGEQDNQFMILFDPSSSISLLKEKVQETYKSLYPFESNINIRNIKNEESYDIPNEYLVGEIFPTNSKVIVESFSSPLKKLDGTMINFKEKNIQHDLDGVENDFATVQSASNGVHAINGKRTHPDESENPRKLPKKNFVEAIDANSPGFVYRPTSIRDRAYSISSNHDNESTLTEGIALKEIESPDKDRKADGIVNLSVTQEEDDNHQSFNSSLTPSQPTTYNRANFFSINDASSDSSSDAPLRTLSSPSRLRMKDNDRKYLVEHSPAALIKESETIDGIDDKSLRSSTREVSVESPNEDSVNDDSSSDVSDEKETEAKHEIRAPAIIVRETSSHPSTAVPSENDTTESENDTLSESSTTSISSSPSENSDTSDDLTKVDSPNKSLVNDNVSAKHDKESENGKSKFPPPSQTLVTTSTISAAGNEPSDEIGSENDSDSDSDSDSSVPLSQLQKKSQQRNSVSHEIQNRGTKGSPKEPKAKPSTERPETHRTLSYSRLSELSKTFSPEIREPSLTKKTAVSMQESKEEGRSDESSESEESGSSSDESDNSEKEDRSNPIPVEKRASTVLNTKKKRKAKRNSALAGLAALV.

S174 bears the Phosphoserine mark. Disordered stretches follow at residues 210–262 (TQEE…PSRL) and 292–599 (DKSL…AALV). Over residues 218-241 (QSFNSSLTPSQPTTYNRANFFSIN) the composition is skewed to polar residues. Residues 242-251 (DASSDSSSDA) show a composition bias toward low complexity. The segment covering 292-303 (DKSLRSSTREVS) has biased composition (basic and acidic residues). At S306 the chain carries Phosphoserine. Positions 307-320 (PNEDSVNDDSSSDV) are enriched in acidic residues. Over residues 321 to 333 (SDEKETEAKHEIR) the composition is skewed to basic and acidic residues. Residues 344–354 (SHPSTAVPSEN) are compositionally biased toward polar residues. Over residues 364-380 (LSESSTTSISSSPSENS) the composition is skewed to low complexity. Residues 390 to 401 (DSPNKSLVNDNV) are compositionally biased toward polar residues. Over residues 402–413 (SAKHDKESENGK) the composition is skewed to basic and acidic residues. A compositionally biased stretch (polar residues) spans 421–431 (QTLVTTSTISA). Over residues 436–452 (PSDEIGSENDSDSDSDS) the composition is skewed to acidic residues. The span at 456–480 (VPLSQLQKKSQQRNSVSHEIQNRGT) shows a compositional bias: polar residues. Residues 483–500 (SPKEPKAKPSTERPETHR) are compositionally biased toward basic and acidic residues. Residues 501 to 514 (TLSYSRLSELSKTF) are compositionally biased toward polar residues. Residue T513 is modified to Phosphothreonine. 2 stretches are compositionally biased toward basic and acidic residues: residues 533 to 542 (ESKEEGRSDE) and 558 to 574 (NSEK…EKRA).

Post-translationally, phosphorylated by clp1.

It is found in the cytoplasm. It localises to the nucleus. The protein resides in the nucleolus. Its subcellular location is the cytoskeleton. The protein localises to the spindle. Its function is as follows. Negatively regulates the septation initiation network (SIN) pathway, independently of the cdc14 phosphatase clp1. May also have a role in silencing rDNA transcription. Required for maintaining the exclusive nucleolus localization of nuc1. This chain is Nucleolar protein dnt1 (dnt1), found in Schizosaccharomyces pombe (strain 972 / ATCC 24843) (Fission yeast).